Here is a 139-residue protein sequence, read N- to C-terminus: Tol-Pal system protein TolR (139 aa).

A helical membrane pass occupies residues 15–35; that stretch reads IVPFLDVLLVLVLIFMATAPI.

Belongs to the ExbD/TolR family. The Tol-Pal system is composed of five core proteins: the inner membrane proteins TolA, TolQ and TolR, the periplasmic protein TolB and the outer membrane protein Pal. They form a network linking the inner and outer membranes and the peptidoglycan layer.

The protein resides in the cell inner membrane. Its function is as follows. Part of the Tol-Pal system, which plays a role in outer membrane invagination during cell division and is important for maintaining outer membrane integrity. This is Tol-Pal system protein TolR from Haemophilus influenzae (strain ATCC 51907 / DSM 11121 / KW20 / Rd).